The chain runs to 192 residues: Ribosome maturation factor RimM (192 aa).

The 77-residue stretch at 116 to 192 (PGEYYWVDLI…RIIVDWQPDY (77 aa)) folds into the PRC barrel domain.

It belongs to the RimM family. Binds ribosomal protein uS19.

It localises to the cytoplasm. An accessory protein needed during the final step in the assembly of 30S ribosomal subunit, possibly for assembly of the head region. Essential for efficient processing of 16S rRNA. May be needed both before and after RbfA during the maturation of 16S rRNA. It has affinity for free ribosomal 30S subunits but not for 70S ribosomes. In Verminephrobacter eiseniae (strain EF01-2), this protein is Ribosome maturation factor RimM.